Consider the following 396-residue polypeptide: Cytochrome b (396 aa).

The next 4 helical transmembrane spans lie at 32 to 52, 76 to 98, 113 to 133, and 179 to 199; these read FGSL…TLAM, WLLR…LHIG, LWSI…IGYV, and FFSL…MHLL. Heme b contacts are provided by His82 and His96. Heme b contacts are provided by His183 and His197. His202 lines the a ubiquinone pocket. 4 helical membrane-spanning segments follow: residues 225–245, 289–309, 321–341, and 348–368; these read FTSK…IFVF, LGGV…ALIH, LLNL…WVGA, and YILI…ILMI.

The protein belongs to the cytochrome b family. Fungal cytochrome b-c1 complex contains 10 subunits; 3 respiratory subunits, 2 core proteins and 5 low-molecular weight proteins. Cytochrome b-c1 complex is a homodimer. Heme b is required as a cofactor.

It is found in the mitochondrion inner membrane. Component of the ubiquinol-cytochrome c reductase complex (complex III or cytochrome b-c1 complex) that is part of the mitochondrial respiratory chain. The b-c1 complex mediates electron transfer from ubiquinol to cytochrome c. Contributes to the generation of a proton gradient across the mitochondrial membrane that is then used for ATP synthesis. The chain is Cytochrome b (cob) from Spizellomyces punctatus.